A 610-amino-acid chain; its full sequence is Preterminal protein (610 aa).

Positions 288-379 are disordered; it reads TLRSGTQTGL…ESFSDDVGLS (92 aa). A Nuclear localization signal motif is present at residues 328–337; the sequence is SLPIRRRRRR. Over residues 331–340 the composition is skewed to basic residues; sequence IRRRRRRGTR. Positions 341–350 are enriched in basic and acidic residues; that stretch reads RQVEREDSVR. The residue at position 549 (S549) is an O-(5'-phospho-DNA)-serine.

The protein belongs to the adenoviridae terminal protein family. As to quaternary structure, heterodimer with the polymerase; this heterodimer binds to bp 9 to 18 of the genome. Interacts with host POU2F1; POU2F1 binds to the auxiliary sequences in the inverted terminal repeats and tethers the pTP-POL heterodimer to the origin DNA thereby participating in the assembly of the pre-initiation complex (POL-TP-DBP-NFIA-POU2F1). Post-translationally, preterminal protein is used to replicate viral genome, upon genomic encapsidation it is processed first into iTP and finally into TP by adenovirus protease.

Its subcellular location is the host nucleus matrix. Protein covalently bound to the viral DNA that acts as a primer for viral genomic replication by DNA strand displacement. Assembles on the viral origin of replication in an initiation complex with viral polymerase, DBP, host NFIA and host POU2F1/OCT1. During initiation, the polymerase covalently couples the first dCTP with Ser-580 of pTP. The terminal protein stimulates the template activity over 20 fold compared to protein-free templates. Neo-synthesized viral genomes are linked to two preterminal proteins, one for each 5' end. These new genomes are encapsidated in the nucleus, and during capsid maturation by viral protease, preterminal protein is first cleaved into intermediary (iTP), then into mature TP. May play a role in host nuclear matrix localization of genomic DNA. This is Preterminal protein from Snake adenovirus serotype 1 (SnAdV-1).